The primary structure comprises 145 residues: UPF0201 protein SSO1042 (145 aa).

This sequence belongs to the UPF0201 family.

This chain is UPF0201 protein SSO1042, found in Saccharolobus solfataricus (strain ATCC 35092 / DSM 1617 / JCM 11322 / P2) (Sulfolobus solfataricus).